The sequence spans 72 residues: Translation initiation factor IF-1 (72 aa).

The 72-residue stretch at 1-72 (MAKQSAIEKD…SKGRIAFRYK (72 aa)) folds into the S1-like domain.

Belongs to the IF-1 family. In terms of assembly, component of the 30S ribosomal translation pre-initiation complex which assembles on the 30S ribosome in the order IF-2 and IF-3, IF-1 and N-formylmethionyl-tRNA(fMet); mRNA recruitment can occur at any time during PIC assembly.

It is found in the cytoplasm. In terms of biological role, one of the essential components for the initiation of protein synthesis. Stabilizes the binding of IF-2 and IF-3 on the 30S subunit to which N-formylmethionyl-tRNA(fMet) subsequently binds. Helps modulate mRNA selection, yielding the 30S pre-initiation complex (PIC). Upon addition of the 50S ribosomal subunit IF-1, IF-2 and IF-3 are released leaving the mature 70S translation initiation complex. This Parabacteroides distasonis (strain ATCC 8503 / DSM 20701 / CIP 104284 / JCM 5825 / NCTC 11152) protein is Translation initiation factor IF-1.